A 1179-amino-acid chain; its full sequence is MAPRPRARPGVAVACCWLLTVVLRCCVSFNVDVKNSMTFSGPVEDMFGYTVQQYENEEGKWVLIGSPLVGQPKNRTGDVYKCPVGRGESLPCVKLDLPVNTSIPNVTEVKENMTFGSTLVTNPNGGFLACGPLYAYRCGHLHYTTGICSDVSPTFQVVNSIAPVQECSTQLDIVIVLDGSNSIYPWDSVTAFLNDLLERMDIGPKQTQVGIVQYGENVTHEFNLNKYSSTEEVLVAAKKIVQRGGRQTMTALGIDTARKEAFTEARGARRGVKKVMVIVTDGESHDNHRLKKVIQDCEDENIQRFSIAILGSYNRGNLSTEKFVEEIKSIASEPTEKHFFNVSDELALVTIVKTLGERIFALEATADQSAASFEMEMSQTGFSAHYSQDWVMLGAVGAYDWNGTVVMQKASQIIIPRNTTFNVESTKKNEPLASYLGYTVNSATASSGDVLYIAGQPRYNHTGQVIIYRMEDGNIKILQTLSGEQIGSYFGSILTTTDIDKDSNTDILLVGAPMYMGTEKEEQGKVYVYALNQTRFEYQMSLEPIKQTCCSSRQHNSCTTENKNEPCGARFGTAIAAVKDLNLDGFNDIVIGAPLEDDHGGAVYIYHGSGKTIRKEYAQRIPSGGDGKTLKFFGQSIHGEMDLNGDGLTDVTIGGLGGAALFWSRDVAVVKVTMNFEPNKVNIQKKNCHMEGKETVCINATVCFDVKLKSKEDTIYEADLQYRVTLDSLRQISRSFFSGTQERKVQRNITVRKSECTKHSFYMLDKHDFQDSVRITLDFNLTDPENGPVLDDSLPNSVHEYIPFAKDCGNKEKCISDLSLHVATTEKDLLIVRSQNDKFNVSLTVKNTKDSAYNTRTIVHYSPNLVFSGIEAIQKDSCESNHNITCKVGYPFLRRGEMVTFKILFQFNTSYLMENVTIYLSATSDSEEPPETLSDNVVNISIPVKYEVGLQFYSSASEYHISIAANETVPEVINSTEDIGNEINIFYLIRKSGSFPMPELKLSISFPNMTSNGYPVLYPTGLSSSENANCRPHIFEDPFSINSGKKMTTSTDHLKRGTILDCNTCKFATITCNLTSSDISQVNVSLILWKPTFIKSYFSSLNLTIRGELRSENASLVLSSSNQKRELAIQISKDGLPGRVPLWVILLSAFAGLLLLMLLILALWKIGFFKRPLKKKMEK.

The signal sequence occupies residues 1-28 (MAPRPRARPGVAVACCWLLTVVLRCCVS). Residues 29–1141 (FNVDVKNSMT…SKDGLPGRVP (1113 aa)) are Extracellular-facing. One copy of the FG-GAP 1 repeat lies at 30-91 (NVDVKNSMTF…CPVGRGESLP (62 aa)). Asn74 carries an N-linked (GlcNAc...) asparagine glycan. Cys82 and Cys92 are oxidised to a cystine. Asn100, Asn105, Asn112, Asn217, Asn317, Asn341, Asn402, Asn418, and Asn460 each carry an N-linked (GlcNAc...) asparagine glycan. The stretch at 101–160 (TSIPNVTEVKENMTFGSTLVTNPNGGFLACGPLYAYRCGHLHYTTGICSDVSPTFQVVNS) is one FG-GAP 2 repeat. One can recognise a VWFA domain in the interval 161-360 (IAPVQECSTQ…IVKTLGERIF (200 aa)). One copy of the FG-GAP 3 repeat lies at 365 to 417 (TADQSAASFEMEMSQTGFSAHYSQDWVMLGAVGAYDWNGTVVMQKASQIIIPR). FG-GAP repeat units follow at residues 422–475 (NVES…DGNI), 476–538 (KILQ…RFEY), 557–615 (SCTT…TIRK), and 619–679 (QRIP…FEPN). Asp498, Asp500, Asp502, and Asp506 together coordinate Ca(2+). The N-linked (GlcNAc...) asparagine glycan is linked to Asn532. Ca(2+)-binding residues include Asp580, Asn582, Asp584, Asp588, Asp642, Asn644, Asp646, and Asp650. Cys688 and Cys697 are joined by a disulfide. 3 N-linked (GlcNAc...) asparagine glycosylation sites follow: Asn699, Asn748, and Asn780. Cys703 and Cys756 are oxidised to a cystine. An intrachain disulfide couples Cys808 to Cys814. N-linked (GlcNAc...) asparagine glycosylation is found at Asn840, Asn883, Asn908, Asn915, Asn939, Asn966, Asn974, and Asn1008. Cys878 and Cys886 form a disulfide bridge. 2 disulfide bridges follow: Cys1030–Cys1062 and Cys1065–Cys1072. Residues Asn1073, Asn1083, Asn1102, and Asn1113 are each glycosylated (N-linked (GlcNAc...) asparagine). A helical transmembrane segment spans residues 1142 to 1164 (LWVILLSAFAGLLLLMLLILALW). Residues 1165–1179 (KIGFFKRPLKKKMEK) are Cytoplasmic-facing. The short motif at 1167 to 1171 (GFFKR) is the GFFKR motif element.

Belongs to the integrin alpha chain family. In terms of assembly, heterodimer of an alpha and a beta subunit. Alpha-1 associates with beta-1. Interacts with RAB21. Interacts (via cytoplasmic domain) with PTPN2; activates PTPN2 phosphatase activity towards EGFR and negatively regulates EGF signaling.

It is found in the membrane. Its function is as follows. Integrin alpha-1/beta-1 is a receptor for laminin and collagen. It recognizes the proline-hydroxylated sequence G-F-P-G-E-R in collagen. Involved in anchorage-dependent, negative regulation of EGF-stimulated cell growth. The sequence is that of Integrin alpha-1 (ITGA1) from Homo sapiens (Human).